Reading from the N-terminus, the 416-residue chain is Pigment epithelium-derived factor (416 aa).

The first 20 residues, 1-20, serve as a signal peptide directing secretion; the sequence is MQALVLLLWTGALLGFGRCQ. Phosphoserine is present on residues S112 and S225. The N-linked (GlcNAc...) asparagine glycan is linked to N283.

The protein belongs to the serpin family. As to quaternary structure, interacts with PNPLA2; this interaction stimulates the phospholipase A2 activity of PNPLA2. As to expression, retinal pigment epithelial cells. Located in the interphotoreceptor matrix (IPM) which is between the retinal pigment epithelium and the neural retina.

The protein resides in the secreted. The protein localises to the melanosome. In terms of biological role, neurotrophic protein; induces extensive neuronal differentiation in retinoblastoma cells. Potent inhibitor of angiogenesis. As it does not undergo the S (stressed) to R (relaxed) conformational transition characteristic of active serpins, it exhibits no serine protease inhibitory activity. This chain is Pigment epithelium-derived factor (SERPINF1), found in Bos taurus (Bovine).